The sequence spans 197 residues: Guanylate kinase (197 aa).

The Guanylate kinase-like domain occupies 7–185 (GLIIILSSPS…TLKKIHEIIV (179 aa)). ATP is bound at residue 14-21 (SPSGTGKS).

The protein belongs to the guanylate kinase family.

It localises to the cytoplasm. It carries out the reaction GMP + ATP = GDP + ADP. Functionally, essential for recycling GMP and indirectly, cGMP. In Rickettsia typhi (strain ATCC VR-144 / Wilmington), this protein is Guanylate kinase.